The sequence spans 329 residues: CDP-diacylglycerol--glycerol-3-phosphate 3-phosphatidyltransferase 1, chloroplastic (329 aa).

The transit peptide at 1 to 38 directs the protein to the chloroplast; the sequence is MAFLKTLNPLLRRSPTPIPNPRSLLSLDAFLAASSPTA. Transmembrane regions (helical) follow at residues 150 to 170, 190 to 210, 217 to 237, and 300 to 320; these read PVIG…TLAL, VFGS…VAIA, LHPG…GGAV, and ITVL…GYGI.

The protein belongs to the CDP-alcohol phosphatidyltransferase class-I family. The cofactor is Mn(2+).

It localises to the plastid. The protein localises to the chloroplast membrane. It catalyses the reaction a CDP-1,2-diacyl-sn-glycerol + sn-glycerol 3-phosphate = a 1,2-diacyl-sn-glycero-3-phospho-(1'-sn-glycero-3'-phosphate) + CMP + H(+). The protein operates within phospholipid metabolism; phosphatidylglycerol biosynthesis; phosphatidylglycerol from CDP-diacylglycerol: step 1/2. Functionally, catalyzes the committed step to the synthesis of the acidic phospholipids. Transfers specifically a phosphatidyl group from CDP-diacylglycerol to glycerol-3-phosphate to form phosphatidylglycerophosphate. This chain is CDP-diacylglycerol--glycerol-3-phosphate 3-phosphatidyltransferase 1, chloroplastic, found in Oryza sativa subsp. japonica (Rice).